The primary structure comprises 1306 residues: Angiotensin-converting enzyme (1306 aa).

The first 29 residues, methionine 1–alanine 29, serve as a signal peptide directing secretion. The Extracellular segment spans residues leucine 30–arginine 1256. N-linked (GlcNAc...) asparagine glycans are attached at residues asparagine 38, asparagine 54, asparagine 74, glutamate 103, asparagine 111, isoleucine 121, tyrosine 140, asparagine 146, and asparagine 160. Peptidase M2 domains are found at residues serine 40 to proline 624 and valine 643 to proline 1222. Cysteines 157 and 165 form a disulfide. Tyrosine 231 lines the chloride pocket. 2 N-linked (GlcNAc...) asparagine glycosylation sites follow: asparagine 318 and asparagine 368. Cysteine 359 and cysteine 377 form a disulfide bridge. Zn(2+) is bound at residue histidine 390. Glutamate 391 (proton acceptor 1) is an active-site residue. Zn(2+) contacts are provided by histidine 394, proline 414, glutamate 418, and arginine 442. 2 N-linked (GlcNAc...) asparagine glycosylation sites follow: asparagine 445 and asparagine 509. Catalysis depends on histidine 520, which acts as the Proton donor 1. Arginine 529 is a chloride binding site. The cysteines at positions 545 and 557 are disulfide-linked. N-linked (GlcNAc...) asparagine glycans are attached at residues asparagine 617 and asparagine 677. Residues asparagine 695 and asparagine 714 are each glycosylated (N-linked (GlcNAc...) (complex) asparagine). An intrachain disulfide couples cysteine 757 to cysteine 763. N-linked (GlcNAc...) asparagine; partial glycosylation occurs at asparagine 760. The chloride site is built by arginine 791 and tyrosine 829. The N-linked (GlcNAc...) asparagine; partial glycan is linked to asparagine 942. Cysteine 957 and cysteine 975 are oxidised to a cystine. Histidine 988 provides a ligand contact to Zn(2+). Glutamate 989 acts as the Proton acceptor 2 in catalysis. Residues histidine 992 and glutamate 1016 each coordinate Zn(2+). Chloride-binding residues include tryptophan 1090 and arginine 1094. Histidine 1118 acts as the Proton donor 2 in catalysis. Arginine 1127 contacts chloride. Residues cysteine 1143 and cysteine 1155 are joined by a disulfide bond. An N-linked (GlcNAc...) asparagine; partial glycan is attached at asparagine 1191. Positions histidine 1215–arginine 1256 are juxtamembrane stalk. Residues valine 1257–serine 1277 form a helical membrane-spanning segment. Topologically, residues glutamine 1278 to serine 1306 are cytoplasmic. Serine 1299 is subject to Phosphoserine.

It belongs to the peptidase M2 family. In terms of assembly, monomer and homodimer; homodimerizes following binding to an inhibitor. Interacts with calmodulin (CALM1, CALM2 or CALM3); interaction takes place in the cytoplasmic region and regulates phosphorylation and proteolytic cleavage. It depends on Zn(2+) as a cofactor. Chloride serves as cofactor. Produced following proteolytic cleavage by secretase enzymes that cleave the transmembrane form in the juxtamembrane stalk region upstream of the transmembrane region. Cleavage can take place at different sites of the juxtamembrane stalk region. In terms of processing, phosphorylated by CK2 on Ser-1299; which allows membrane retention. Phosphorylated on tyrosine residues on its extracellular part, promoting cleavage by secretase enzymes and formation of the soluble form (Angiotensin-converting enzyme, soluble form). Ubiquitously expressed, with highest levels in lung, kidney, heart, gastrointestinal system and prostate. In terms of tissue distribution, specifically expressed in spermatocytes and adult testis.

The protein localises to the cell membrane. Its subcellular location is the cytoplasm. The protein resides in the secreted. The enzyme catalyses Release of a C-terminal dipeptide, oligopeptide-|-Xaa-Yaa, when Xaa is not Pro, and Yaa is neither Asp nor Glu. Thus, conversion of angiotensin I to angiotensin II, with increase in vasoconstrictor activity, but no action on angiotensin II.. It carries out the reaction angiotensin I + H2O = L-histidyl-L-leucine + angiotensin II. The catalysed reaction is bradykinin + H2O = L-Phe-L-Arg + bradykinin(1-7). It catalyses the reaction substance P + H2O = substance P(1-9) + L-Leu-L-Met-NH2. The enzyme catalyses substance P + H2O = substance P(1-8) + Gly-L-Leu-L-Met-NH2. It carries out the reaction substance P + H2O = L-Phe-L-Phe-Gly-L-Leu-L-Met-NH2 + substance P(1-6). The catalysed reaction is neurotensin + H2O = neurotensin(1-11) + L-isoleucyl-L-leucine. It catalyses the reaction goralatide + H2O = N-acetyl-L-seryl-L-aspartate + L-lysyl-L-proline. The enzyme catalyses Met-enkephalin + H2O = L-phenylalanyl-L-methionine + L-tyrosylglycylglycine. It carries out the reaction Leu-enkephalin + H2O = L-tyrosylglycylglycine + L-phenylalanyl-L-leucine. The catalysed reaction is Met-enkephalin-Arg-Phe + H2O = L-arginyl-L-phenylalanine + Met-enkephalin. Its activity is regulated as follows. The dipeptidyl carboxypeptidase activity is strongly activated by chloride. The dipeptidyl carboxypeptidase activity is specifically inhibited by lisinopril, captopril and enalaprilat. With respect to regulation, strongly inhibited by lisinopril and captopril. In terms of biological role, dipeptidyl carboxypeptidase that removes dipeptides from the C-terminus of a variety of circulating hormones, such as angiotensin I, bradykinin or enkephalins, thereby playing a key role in the regulation of blood pressure, electrolyte homeostasis or synaptic plasticity. Composed of two similar catalytic domains, each possessing a functional active site, with different selectivity for substrates. Plays a major role in the angiotensin-renin system that regulates blood pressure and sodium retention by the kidney by converting angiotensin I to angiotensin II, resulting in an increase of the vasoconstrictor activity of angiotensin. Also able to inactivate bradykinin, a potent vasodilator, and therefore enhance the blood pressure response. Acts as a regulator of synaptic transmission by mediating cleavage of neuropeptide hormones, such as substance P, neurotensin or enkephalins. Catalyzes degradation of different enkephalin neuropeptides (Met-enkephalin, Leu-enkephalin, Met-enkephalin-Arg-Phe and possibly Met-enkephalin-Arg-Gly-Leu). Acts as a regulator of synaptic plasticity in the nucleus accumbens of the brain by mediating cleavage of Met-enkephalin-Arg-Phe, a strong ligand of Mu-type opioid receptor OPRM1, into Met-enkephalin. Met-enkephalin-Arg-Phe cleavage by ACE decreases activation of OPRM1, leading to long-term synaptic potentiation of glutamate release. Also acts as a regulator of hematopoietic stem cell differentiation by mediating degradation of hemoregulatory peptide N-acetyl-SDKP (AcSDKP). Acts as a regulator of cannabinoid signaling pathway by mediating degradation of hemopressin, an antagonist peptide of the cannabinoid receptor CNR1. Involved in amyloid-beta metabolism by catalyzing degradation of Amyloid-beta protein 40 and Amyloid-beta protein 42 peptides, thereby preventing plaque formation. Catalyzes cleavage of cholecystokinin (maturation of Cholecystokinin-8 and Cholecystokinin-5) and Gonadoliberin-1 (both maturation and degradation) hormones. Degradation of hemoregulatory peptide N-acetyl-SDKP (AcSDKP) and amyloid-beta proteins is mediated by the N-terminal catalytic domain, while angiotensin I and cholecystokinin cleavage is mediated by the C-terminal catalytic region. Its function is as follows. Soluble form that is released in blood plasma and other body fluids following proteolytic cleavage in the juxtamembrane stalk region. Isoform produced by alternative promoter usage that is specifically expressed in spermatocytes and adult testis, and which is required for male fertility. In contrast to somatic isoforms, only contains one catalytic domain. Acts as a dipeptidyl carboxypeptidase that removes dipeptides from the C-terminus of substrates. The identity of substrates that are needed for male fertility is unknown. May also have a glycosidase activity which releases GPI-anchored proteins from the membrane by cleaving the mannose linkage in the GPI moiety. The GPIase activity was reported to be essential for the egg-binding ability of the sperm. This activity is however unclear and has been challenged by other groups, suggesting that it may be indirect. The sequence is that of Angiotensin-converting enzyme from Homo sapiens (Human).